A 335-amino-acid chain; its full sequence is Taste receptor type 2 member 119 (335 aa).

Over 1–7 the chain is Extracellular; it reads MMEGHIL. The helical transmembrane segment at 8-28 threads the bilayer; it reads FFFLVVMVQFVTGVLANGLIV. At 29-43 the chain is on the cytoplasmic side; that stretch reads VVHAIDLIMWKKMAP. Residues 44 to 64 traverse the membrane as a helical segment; sequence LDLLLFCLATSRIILQLCILF. At 65-81 the chain is on the extracellular side; it reads AQLCLFSLVRHTLFEDN. Asn81 carries N-linked (GlcNAc...) asparagine glycosylation. The chain crosses the membrane as a helical span at residues 82–102; that stretch reads ITFVFIINELSLWFATWLGVF. Residues 103–124 lie on the Cytoplasmic side of the membrane; the sequence is YCAKIATIPHPLFLWLKMRISR. The chain crosses the membrane as a helical span at residues 125-145; it reads LVPWLILGSVLYVIITTFIHS. The Extracellular portion of the chain corresponds to 146-176; the sequence is RETSAILKPIFISLFPKNATQVGTGHATLLS. Asn163 carries N-linked (GlcNAc...) asparagine glycosylation. A helical membrane pass occupies residues 177-197; sequence VLVLGLTLPLFIFTVAVLLLI. Topologically, residues 198–224 are cytoplasmic; the sequence is YSLWNYSRQMRTMVGTREYSGHAHISA. The helical transmembrane segment at 225 to 245 threads the bilayer; the sequence is MLSILSFLILYLSHYMVAVLI. Residues 246–256 are Extracellular-facing; the sequence is STQVLYLGSRT. The chain crosses the membrane as a helical span at residues 257–277; that stretch reads FVFCLLVIGMYPSIHSIVLIL. Residues 278-335 are Cytoplasmic-facing; it reads GNPKLKRNAKMFIVHCKCCHCTRAWVTSRSPRLSDLPVPPTHPSANKTSCSEACIMPS. The disordered stretch occupies residues 308-327; the sequence is PRLSDLPVPPTHPSANKTSC.

Belongs to the G-protein coupled receptor T2R family. Expressed in subsets of taste receptor cells of the tongue and palate epithelium and exclusively in gustducin-positive cells. Expressed in the duodenum, antrum and fundus (part of the stomach).

The protein resides in the membrane. In terms of biological role, gustducin-coupled receptor implicated in the perception of bitter compounds in the oral cavity and the gastrointestinal tract. Signals through PLCB2 and the calcium-regulated cation channel TRPM5. The protein is Taste receptor type 2 member 119 (Tas2r119) of Rattus norvegicus (Rat).